We begin with the raw amino-acid sequence, 344 residues long: Acireductone dioxygenase (344 aa).

Fe(2+)-binding residues include histidine 92, histidine 94, glutamate 98, and histidine 137. The Ni(2+) site is built by histidine 92, histidine 94, glutamate 98, and histidine 137.

Belongs to the acireductone dioxygenase (ARD) family. Requires Fe(2+) as cofactor. It depends on Ni(2+) as a cofactor.

It is found in the cytoplasm. The protein resides in the nucleus. It carries out the reaction 1,2-dihydroxy-5-(methylsulfanyl)pent-1-en-3-one + O2 = 4-methylsulfanyl-2-oxobutanoate + formate + 2 H(+). The enzyme catalyses 1,2-dihydroxy-5-(methylsulfanyl)pent-1-en-3-one + O2 = 3-(methylsulfanyl)propanoate + CO + formate + 2 H(+). It participates in amino-acid biosynthesis; L-methionine biosynthesis via salvage pathway; L-methionine from S-methyl-5-thio-alpha-D-ribose 1-phosphate: step 5/6. Catalyzes 2 different reactions between oxygen and the acireductone 1,2-dihydroxy-3-keto-5-methylthiopentene (DHK-MTPene) depending upon the metal bound in the active site. Fe-containing acireductone dioxygenase (Fe-ARD) produces formate and 2-keto-4-methylthiobutyrate (KMTB), the alpha-ketoacid precursor of methionine in the methionine recycle pathway. Ni-containing acireductone dioxygenase (Ni-ARD) produces methylthiopropionate, carbon monoxide and formate, and does not lie on the methionine recycle pathway. This Leishmania braziliensis protein is Acireductone dioxygenase.